The sequence spans 649 residues: Acetyl-coenzyme A synthetase (649 aa).

CoA contacts are provided by residues arginine 189 to lysine 192, threonine 311, and asparagine 335. ATP contacts are provided by residues glycine 387 to proline 389, aspartate 411 to threonine 416, aspartate 500, and arginine 515. A CoA-binding site is contributed by serine 523. Residue arginine 526 participates in ATP binding. Residues valine 537, histidine 539, and valine 542 each contribute to the Mg(2+) site. Arginine 584 is a CoA binding site. Position 609 is an N6-acetyllysine (lysine 609).

Belongs to the ATP-dependent AMP-binding enzyme family. The cofactor is Mg(2+). Post-translationally, acetylated. Deacetylation by the SIR2-homolog deacetylase activates the enzyme.

It carries out the reaction acetate + ATP + CoA = acetyl-CoA + AMP + diphosphate. Functionally, catalyzes the conversion of acetate into acetyl-CoA (AcCoA), an essential intermediate at the junction of anabolic and catabolic pathways. AcsA undergoes a two-step reaction. In the first half reaction, AcsA combines acetate with ATP to form acetyl-adenylate (AcAMP) intermediate. In the second half reaction, it can then transfer the acetyl group from AcAMP to the sulfhydryl group of CoA, forming the product AcCoA. This is Acetyl-coenzyme A synthetase from Sinorhizobium fredii (strain NBRC 101917 / NGR234).